The chain runs to 124 residues: Kalata-B1 (124 aa).

The first 22 residues, M1–G22, serve as a signal peptide directing secretion. A propeptide spanning residues S23–K88 is cleaved from the precursor. The cyclopeptide (Gly-Asn) cross-link spans G89 to N117. 3 disulfide bridges follow: C93/C107, C97/C109, and C102/C114. Positions G118–A124 are excised as a propeptide.

It belongs to the cyclotide family. Moebius subfamily. Post-translationally, kalata-B1 is a cyclic peptide which occurs in three forms: with unmodified Trp-111, with Trp-111 oxidized to form oxindolylalanine and with Trp-111 oxidized to form N-formylkynurenine. Oxidation is enhanced by exposure to sunlight. Leaves and stems. Lower in roots.

Probably participates in a plant defense mechanism. Has antibiotic activity. Has a diuretic effect. Has a uterotonic effect in humans. Active against the Gram-positive S.aureus with a minimum inhibition concentration of approximately 0.2 microM. Relatively ineffective against Gram-negative bacteria such as E.coli and P.aeruginosa. Inhibitory effect on the growth and development of larvae from H.punctigera. The unmodified form has hemolytic activity, the oxidized form lacks hemolytic activity. If the protein is linearized, hemolytic activity is lost. This is Kalata-B1 (OAK1) from Oldenlandia affinis.